Reading from the N-terminus, the 367-residue chain is Protein SUPPRESSOR OF FRI 4 (367 aa).

Residues 7–66 (RATEKVWCYYCDREFDDEKILVQHQKAKHFKCHVCHKKLSTASGMVIHVLQVHKENVTKV) form a BED-type zinc finger. Positions 38, 41, 54, and 59 each coordinate Zn(2+). The interval 246–309 (PFSAPLPVGG…PPVIANKAPS (64 aa)) is disordered. Polar residues predominate over residues 273 to 295 (PNNSIPGGTNAHSYASGPNTSGP).

As to quaternary structure, homodimer. Component of the transcription activator complex FRI-C composed of FRI, FRL1, SUF4, FLX and FES1. Interacts with LD, ASHH2, FRL1, (via C-terminus) with FRI (via C-terminus), and with SWC6, a component of the SWR1 chromatin-remodeling complex. Binds to MED18 to regulate flowering time; recruits MED18 to FLC promoter. Expressed in root, shoot apex, leaves, stem and flowers. Expressed in expanding leaves, in the vasculature of fully expanded leaves, in the inflorescence, throughout young floral primordia, in the carpels of older flowers and in fertilized ovules.

It localises to the nucleus. In terms of biological role, sequence-specific DNA binding factor that recognizes the 5'-CCAAATTTTAAGTTT-3' sequence. Recruits the FRI-C complex to the FLC promoter. Required for FRI-mediated FLC activation, but has no effect on the expression of MAF1, MAF2, MAF3, MAF5, UFC and CO. Dispensable for the reactivation of FLC in early embryogenesis, but required to maintain high levels of FLC expression in later embryonic and vegetative development. This Arabidopsis thaliana (Mouse-ear cress) protein is Protein SUPPRESSOR OF FRI 4.